The following is a 100-amino-acid chain: MKQEKLSLHDVLIRPIITEKALILREQRKYVFEVNPLANKNLVKEAVEKLFNVKVEKVNILNMKPKPKRRGIFEGKTRSWKKAVVTLKEGYTIKELEGEH.

Belongs to the universal ribosomal protein uL23 family. As to quaternary structure, part of the 50S ribosomal subunit. Contacts protein L29, and trigger factor when it is bound to the ribosome.

Functionally, one of the early assembly proteins it binds 23S rRNA. One of the proteins that surrounds the polypeptide exit tunnel on the outside of the ribosome. Forms the main docking site for trigger factor binding to the ribosome. This chain is Large ribosomal subunit protein uL23, found in Thermotoga maritima (strain ATCC 43589 / DSM 3109 / JCM 10099 / NBRC 100826 / MSB8).